The following is a 469-amino-acid chain: 3-isopropylmalate dehydratase large subunit (469 aa).

[4Fe-4S] cluster-binding residues include Cys-347, Cys-408, and Cys-411.

This sequence belongs to the aconitase/IPM isomerase family. LeuC type 1 subfamily. As to quaternary structure, heterodimer of LeuC and LeuD. It depends on [4Fe-4S] cluster as a cofactor.

It carries out the reaction (2R,3S)-3-isopropylmalate = (2S)-2-isopropylmalate. It functions in the pathway amino-acid biosynthesis; L-leucine biosynthesis; L-leucine from 3-methyl-2-oxobutanoate: step 2/4. Functionally, catalyzes the isomerization between 2-isopropylmalate and 3-isopropylmalate, via the formation of 2-isopropylmaleate. The chain is 3-isopropylmalate dehydratase large subunit from Actinobacillus pleuropneumoniae serotype 7 (strain AP76).